The chain runs to 137 residues: Small ribosomal subunit protein uS12 (137 aa).

The disordered stretch occupies residues 1-44 (MPTINQLVRKGRKSRTSKSDAPALNFGYNSMKKKATDNPAPQKR). 3-methylthioaspartic acid is present on D102.

Belongs to the universal ribosomal protein uS12 family. In terms of assembly, part of the 30S ribosomal subunit. Contacts proteins S8 and S17. May interact with IF1 in the 30S initiation complex.

With S4 and S5 plays an important role in translational accuracy. Functionally, interacts with and stabilizes bases of the 16S rRNA that are involved in tRNA selection in the A site and with the mRNA backbone. Located at the interface of the 30S and 50S subunits, it traverses the body of the 30S subunit contacting proteins on the other side and probably holding the rRNA structure together. The combined cluster of proteins S8, S12 and S17 appears to hold together the shoulder and platform of the 30S subunit. This chain is Small ribosomal subunit protein uS12, found in Latilactobacillus sakei subsp. sakei (strain 23K) (Lactobacillus sakei subsp. sakei).